A 31-amino-acid polypeptide reads, in one-letter code: Cyclotide hyen-J (31 aa).

The cyclopeptide (Gly-Asp) cross-link spans 1–31; the sequence is GSVPCGESCVWIPCITSIAGCSCSNKVCYMD. 3 disulfide bridges follow: cysteine 5-cysteine 21, cysteine 9-cysteine 23, and cysteine 14-cysteine 28.

In terms of processing, this is a cyclic peptide. Detected in seeds (at protein level).

Probably participates in a plant defense mechanism. This is Cyclotide hyen-J from Pigea enneasperma (Spade flower).